A 490-amino-acid chain; its full sequence is Glutamyl-tRNA(Gln) amidotransferase subunit A (490 aa).

Active-site charge relay system residues include K78 and S158. The Acyl-ester intermediate role is filled by S182.

It belongs to the amidase family. GatA subfamily. Heterotrimer of A, B and C subunits.

It carries out the reaction L-glutamyl-tRNA(Gln) + L-glutamine + ATP + H2O = L-glutaminyl-tRNA(Gln) + L-glutamate + ADP + phosphate + H(+). Allows the formation of correctly charged Gln-tRNA(Gln) through the transamidation of misacylated Glu-tRNA(Gln) in organisms which lack glutaminyl-tRNA synthetase. The reaction takes place in the presence of glutamine and ATP through an activated gamma-phospho-Glu-tRNA(Gln). This chain is Glutamyl-tRNA(Gln) amidotransferase subunit A, found in Caulobacter sp. (strain K31).